The primary structure comprises 201 residues: 3-isopropylmalate dehydratase small subunit (201 aa).

Belongs to the LeuD family. LeuD type 1 subfamily. In terms of assembly, heterodimer of LeuC and LeuD.

It catalyses the reaction (2R,3S)-3-isopropylmalate = (2S)-2-isopropylmalate. It participates in amino-acid biosynthesis; L-leucine biosynthesis; L-leucine from 3-methyl-2-oxobutanoate: step 2/4. Its function is as follows. Catalyzes the isomerization between 2-isopropylmalate and 3-isopropylmalate, via the formation of 2-isopropylmaleate. This chain is 3-isopropylmalate dehydratase small subunit, found in Shewanella baltica (strain OS155 / ATCC BAA-1091).